Reading from the N-terminus, the 20-residue chain is Cupiennin-6f (20 aa).

Expressed by the venom gland.

The protein resides in the secreted. This Cupiennius salei (American wandering spider) protein is Cupiennin-6f.